The sequence spans 160 residues: MARPRPAEFEKKKVVAENRRARFDYFLEQFFEAGIALTGTEVKSLRFGEGSIAESYAEVKDDQVWLVNSNVPEFSHGNRFNHEPKRPRKLLLHAREIDKMRNGVSREGMTLIPLSIYFNGRGRAKVELALAKGKKLHDKRDTEKERDWKREQQRLLRDRG.

Residues 133–160 are disordered; that stretch reads GKKLHDKRDTEKERDWKREQQRLLRDRG. Residues 138–160 are compositionally biased toward basic and acidic residues; the sequence is DKRDTEKERDWKREQQRLLRDRG.

This sequence belongs to the SmpB family.

It localises to the cytoplasm. Required for rescue of stalled ribosomes mediated by trans-translation. Binds to transfer-messenger RNA (tmRNA), required for stable association of tmRNA with ribosomes. tmRNA and SmpB together mimic tRNA shape, replacing the anticodon stem-loop with SmpB. tmRNA is encoded by the ssrA gene; the 2 termini fold to resemble tRNA(Ala) and it encodes a 'tag peptide', a short internal open reading frame. During trans-translation Ala-aminoacylated tmRNA acts like a tRNA, entering the A-site of stalled ribosomes, displacing the stalled mRNA. The ribosome then switches to translate the ORF on the tmRNA; the nascent peptide is terminated with the 'tag peptide' encoded by the tmRNA and targeted for degradation. The ribosome is freed to recommence translation, which seems to be the essential function of trans-translation. This is SsrA-binding protein from Rhizorhabdus wittichii (strain DSM 6014 / CCUG 31198 / JCM 15750 / NBRC 105917 / EY 4224 / RW1) (Sphingomonas wittichii).